Consider the following 491-residue polypeptide: Probable malate:quinone oxidoreductase (491 aa).

The protein belongs to the MQO family. It depends on FAD as a cofactor.

The catalysed reaction is (S)-malate + a quinone = a quinol + oxaloacetate. The protein operates within carbohydrate metabolism; tricarboxylic acid cycle; oxaloacetate from (S)-malate (quinone route): step 1/1. The protein is Probable malate:quinone oxidoreductase of Leifsonia xyli subsp. xyli (strain CTCB07).